Consider the following 160-residue polypeptide: Small ribosomal subunit protein uS7 (160 aa).

It belongs to the universal ribosomal protein uS7 family. Part of the 30S ribosomal subunit. Contacts proteins S9 and S11.

One of the primary rRNA binding proteins, it binds directly to 16S rRNA where it nucleates assembly of the head domain of the 30S subunit. Is located at the subunit interface close to the decoding center, probably blocks exit of the E-site tRNA. This is Small ribosomal subunit protein uS7 from Rickettsia canadensis (strain McKiel).